The chain runs to 96 residues: Class I hydrophobin 2 (96 aa).

The N-terminal stretch at 1 to 15 is a signal peptide; the sequence is MFKALIVALAAVAAA. 4 disulfide bridges follow: Cys-28/Cys-77, Cys-34/Cys-71, Cys-35/Cys-55, and Cys-78/Cys-91.

The protein belongs to the fungal hydrophobin family.

Its subcellular location is the secreted. The protein resides in the cell wall. Functionally, aerial growth, conidiation, and dispersal of filamentous fungi in the environment rely upon a capability of their secreting small amphipathic proteins called hydrophobins (HPBs) with low sequence identity. Class I can self-assemble into an outermost layer of rodlet bundles on aerial cell surfaces, conferring cellular hydrophobicity that supports fungal growth, development and dispersal; whereas Class II form highly ordered films at water-air interfaces through intermolecular interactions but contribute nothing to the rodlet structure. Hyd2 plays a neglectable role in hyphal growth and asexual development and does not seem involved in cellular hydrophobicity, conidial adhesion, stress tolerance nor insect pathogenicity. The protein is Class I hydrophobin 2 of Metarhizium robertsii (strain ARSEF 23 / ATCC MYA-3075) (Metarhizium anisopliae (strain ARSEF 23)).